A 330-amino-acid polypeptide reads, in one-letter code: Urokinase plasminogen activator surface receptor (330 aa).

An N-terminal signal peptide occupies residues 1-20; sequence MGQPLLLLLLVYTYIPGSWG. UPAR/Ly6 domains are found at residues 21–112, 113–208, and 209–300; these read LRCL…RNRY, LECA…PPNG, and LQCY…PGKG. 3 disulfides stabilise this stretch: C23/C44, C26/C32, and C37/C65. Residue N28 is glycosylated (N-linked (GlcNAc...) asparagine). Residue N72 is glycosylated (N-linked (GlcNAc...) asparagine). 11 disulfides stabilise this stretch: C91-C96, C115-C142, C118-C125, C135-C164, C170-C187, C188-C193, C211-C239, C214-C222, C232-C258, C264-C282, and C283-C288. N-linked (GlcNAc...) asparagine glycans are attached at residues N179 and N189. N279 carries N-linked (GlcNAc...) asparagine glycosylation. A lipid anchor (GPI-anchor amidated glycine) is attached at G300. A propeptide spans 301–330 (removed in mature form); that stretch reads GAPKTSPAHLSFFVSLLLTARLWGATLLCT.

As to quaternary structure, monomer. Interacts (via the UPAR/Ly6 domains) with SRPX2. Interacts with MRC2. Interacts with SORL1 (via N-terminal ectodomain); this interaction decreases PLAUR internalization. The ternary complex composed of PLAUR-PLAU-SERPINE1 also interacts with SORL1. Interacts with CD82; this interaction prevents PLAUR from binding to its high affinity ligand PLAU.

It is found in the cell membrane. In terms of biological role, acts as a receptor for urokinase plasminogen activator. Plays a role in localizing and promoting plasmin formation. Mediates the proteolysis-independent signal transduction activation effects of U-PA. In Bos taurus (Bovine), this protein is Urokinase plasminogen activator surface receptor (PLAUR).